Consider the following 132-residue polypeptide: Fertilization-influencing membrane protein (132 aa).

A helical transmembrane segment spans residues 100–120 (PGLFHHILVGLLVVAFFFLLF).

Testis-specific.

It localises to the cell membrane. Functionally, may play a role in sperm-oocyte fusion during fertilization. The polypeptide is Fertilization-influencing membrane protein (Homo sapiens (Human)).